The primary structure comprises 421 residues: Histidine--tRNA ligase (421 aa).

Belongs to the class-II aminoacyl-tRNA synthetase family.

The protein resides in the cytoplasm. It catalyses the reaction tRNA(His) + L-histidine + ATP = L-histidyl-tRNA(His) + AMP + diphosphate + H(+). The protein is Histidine--tRNA ligase of Pyrobaculum calidifontis (strain DSM 21063 / JCM 11548 / VA1).